The chain runs to 137 residues: Protein MesC (137 aa).

In Leuconostoc mesenteroides, this protein is Protein MesC (mesC).